The sequence spans 237 residues: Demethylmenaquinone methyltransferase (237 aa).

S-adenosyl-L-methionine is bound by residues threonine 58, aspartate 79, and 106–107 (NA).

It belongs to the class I-like SAM-binding methyltransferase superfamily. MenG/UbiE family.

The catalysed reaction is a 2-demethylmenaquinol + S-adenosyl-L-methionine = a menaquinol + S-adenosyl-L-homocysteine + H(+). It participates in quinol/quinone metabolism; menaquinone biosynthesis; menaquinol from 1,4-dihydroxy-2-naphthoate: step 2/2. Its function is as follows. Methyltransferase required for the conversion of demethylmenaquinol (DMKH2) to menaquinol (MKH2). This is Demethylmenaquinone methyltransferase from Bacillus cereus (strain B4264).